A 214-amino-acid chain; its full sequence is Calcineurin B homologous protein 3 (214 aa).

Gly2 is lipidated: N-myristoyl glycine. Residues 110 to 145 (CRKDKLRFLFNMYDTDNDSKITLEEYRKVVEELLSG) form the EF-hand domain. Residues Asp123, Asp125, Asp127, Lys129, and Glu134 each contribute to the Ca(2+) site.

It belongs to the calcineurin regulatory subunit family. CHP subfamily. Monomer. Homodimer.

It localises to the nucleus. The protein resides in the cytoplasm. Its subcellular location is the membrane. It is found in the cell membrane. The protein localises to the cell projection. It localises to the lamellipodium. The protein resides in the ruffle membrane. Functionally, functions as an integral cofactor in cell pH regulation by controlling plasma membrane-type Na(+)/H(+) exchange activity. Promotes the induction of hematopoietic stem cell differentiation toward megakaryocytic lineage. Essential for the coupling of ERK cascade activation with the expression of ETS family genes in megakaryocytic differentiation. Also involved in granulocytic differentiation in a ERK-dependent manner. Inhibits the phosphatase activity of calcineurin. This chain is Calcineurin B homologous protein 3 (tesc), found in Xenopus tropicalis (Western clawed frog).